We begin with the raw amino-acid sequence, 37 residues long: Large ribosomal subunit protein bL36 (37 aa).

This sequence belongs to the bacterial ribosomal protein bL36 family.

In Gloeobacter violaceus (strain ATCC 29082 / PCC 7421), this protein is Large ribosomal subunit protein bL36.